A 243-amino-acid polypeptide reads, in one-letter code: Probable transcriptional regulatory protein LCA_1307 (243 aa).

The interval 1–21 is disordered; the sequence is MSGHSKWHNIQGRKNAQDAKR.

This sequence belongs to the TACO1 family.

The protein localises to the cytoplasm. The chain is Probable transcriptional regulatory protein LCA_1307 from Latilactobacillus sakei subsp. sakei (strain 23K) (Lactobacillus sakei subsp. sakei).